The following is an 87-amino-acid chain: Small ribosomal subunit protein uS15 (87 aa).

It belongs to the universal ribosomal protein uS15 family. In terms of assembly, part of the 30S ribosomal subunit. Forms a bridge to the 50S subunit in the 70S ribosome, contacting the 23S rRNA.

Functionally, one of the primary rRNA binding proteins, it binds directly to 16S rRNA where it helps nucleate assembly of the platform of the 30S subunit by binding and bridging several RNA helices of the 16S rRNA. Forms an intersubunit bridge (bridge B4) with the 23S rRNA of the 50S subunit in the ribosome. This chain is Small ribosomal subunit protein uS15, found in Alkaliphilus oremlandii (strain OhILAs) (Clostridium oremlandii (strain OhILAs)).